A 524-amino-acid polypeptide reads, in one-letter code: Ribonuclease Y (524 aa).

A helical transmembrane segment spans residues 3–23; the sequence is IVINLFLIIFASVVFFAAGFF. The KH domain maps to 214–274; it reads ALSVVHIQSD…LRREHAKLTL (61 aa). Positions 340 to 432 constitute an HD domain; it reads LLQHSREVAM…VDAANVISLA (93 aa).

Belongs to the RNase Y family.

The protein localises to the cell membrane. In terms of biological role, endoribonuclease that initiates mRNA decay. The sequence is that of Ribonuclease Y from Chlorobium luteolum (strain DSM 273 / BCRC 81028 / 2530) (Pelodictyon luteolum).